The sequence spans 126 residues: Pancreatic polypeptide prohormone (126 aa).

Positions 1-26 (MTATRCCLWLLLLGTCMALLLPEAWG) are cleaved as a signal peptide. At Tyr-62 the chain carries Tyrosine amide. A disordered region spans residues 77 to 126 (RQSHAAAPGGSHRHPPAGLPAAKGGTGVSGSPPKPWDCLPCRAHSLPSQS).

Belongs to the NPY family. No icosapeptide-like peptide is cleaved from the C-terminal.

The protein localises to the secreted. Its function is as follows. Hormone secreted by pancreatic cells that acts as a regulator of pancreatic and gastrointestinal functions probably by signaling through the G protein-coupled receptor NPY4R2. The sequence is that of Pancreatic polypeptide prohormone (PPY) from Cavia porcellus (Guinea pig).